We begin with the raw amino-acid sequence, 965 residues long: UvrABC system protein A (965 aa).

Position 32–39 (32–39 (GLSGSGKS)) interacts with ATP. A C4-type zinc finger spans residues 254-281 (CPVCDYSLPELEPRLFSFNAPMGACPAC). 2 ABC transporter domains span residues 311-588 (WDRR…PRSL) and 608-937 (PNAT…HFLA). 641-648 (GVSGSGKS) serves as a coordination point for ATP. The C4-type zinc-finger motif lies at 740–766 (CEACEGDGLIKVEMHFLPDVYVPCDVC).

It belongs to the ABC transporter superfamily. UvrA family. In terms of assembly, forms a heterotetramer with UvrB during the search for lesions.

It is found in the cytoplasm. Functionally, the UvrABC repair system catalyzes the recognition and processing of DNA lesions. UvrA is an ATPase and a DNA-binding protein. A damage recognition complex composed of 2 UvrA and 2 UvrB subunits scans DNA for abnormalities. When the presence of a lesion has been verified by UvrB, the UvrA molecules dissociate. This is UvrABC system protein A from Xylella fastidiosa (strain 9a5c).